Consider the following 154-residue polypeptide: Prefoldin subunit 5 (154 aa).

Position 2 is an N-acetylalanine (Ala-2). Lys-42 is modified (N6-acetyllysine). Ser-56 bears the Phosphoserine mark.

This sequence belongs to the prefoldin subunit alpha family. In terms of assembly, heterohexamer of two PFD-alpha type and four PFD-beta type subunits.

Its subcellular location is the nucleus. Functionally, binds specifically to cytosolic chaperonin (c-CPN) and transfers target proteins to it. Binds to nascent polypeptide chain and promotes folding in an environment in which there are many competing pathways for nonnative proteins. Represses the transcriptional activity of MYC. This chain is Prefoldin subunit 5 (Pfdn5), found in Mus musculus (Mouse).